Consider the following 547-residue polypeptide: CTP synthase (547 aa).

The segment at 1–265 (MARFIFITGG…DQAVLDAFQI (265 aa)) is amidoligase domain. Residue serine 13 coordinates CTP. Serine 13 is a UTP binding site. ATP-binding positions include 14-19 (SLGKGL) and aspartate 71. Positions 71 and 139 each coordinate Mg(2+). Residues 146–148 (DIE), 186–191 (KTKPTQ), and lysine 222 contribute to the CTP site. Residues 186-191 (KTKPTQ) and lysine 222 each bind UTP. Positions 291-546 (KIAIVGKYVQ…VRAAKESSRL (256 aa)) constitute a Glutamine amidotransferase type-1 domain. Glycine 353 serves as a coordination point for L-glutamine. Catalysis depends on cysteine 380, which acts as the Nucleophile; for glutamine hydrolysis. L-glutamine contacts are provided by residues 381-384 (LGMQ), glutamate 404, and arginine 474. Active-site residues include histidine 519 and glutamate 521.

It belongs to the CTP synthase family. Homotetramer.

The catalysed reaction is UTP + L-glutamine + ATP + H2O = CTP + L-glutamate + ADP + phosphate + 2 H(+). It carries out the reaction L-glutamine + H2O = L-glutamate + NH4(+). The enzyme catalyses UTP + NH4(+) + ATP = CTP + ADP + phosphate + 2 H(+). Its pathway is pyrimidine metabolism; CTP biosynthesis via de novo pathway; CTP from UDP: step 2/2. Allosterically activated by GTP, when glutamine is the substrate; GTP has no effect on the reaction when ammonia is the substrate. The allosteric effector GTP functions by stabilizing the protein conformation that binds the tetrahedral intermediate(s) formed during glutamine hydrolysis. Inhibited by the product CTP, via allosteric rather than competitive inhibition. Catalyzes the ATP-dependent amination of UTP to CTP with either L-glutamine or ammonia as the source of nitrogen. Regulates intracellular CTP levels through interactions with the four ribonucleotide triphosphates. This chain is CTP synthase, found in Ruegeria pomeroyi (strain ATCC 700808 / DSM 15171 / DSS-3) (Silicibacter pomeroyi).